The primary structure comprises 131 residues: Small ribosomal subunit protein uS8 (131 aa).

It belongs to the universal ribosomal protein uS8 family. As to quaternary structure, part of the 30S ribosomal subunit. Contacts proteins S5 and S12.

Its function is as follows. One of the primary rRNA binding proteins, it binds directly to 16S rRNA central domain where it helps coordinate assembly of the platform of the 30S subunit. This chain is Small ribosomal subunit protein uS8, found in Janthinobacterium sp. (strain Marseille) (Minibacterium massiliensis).